A 174-amino-acid polypeptide reads, in one-letter code: Putative serine protease 46 (174 aa).

The 132-residue stretch at 43–174 (VVKGKLVEVG…IGWGTTGKKG (132 aa)) folds into the Peptidase S1 domain. Cysteine 68 and cysteine 84 are oxidised to a cystine. Active-site charge relay system residues include histidine 83 and aspartate 128.

It belongs to the peptidase S1 family.

This Homo sapiens (Human) protein is Putative serine protease 46.